Reading from the N-terminus, the 347-residue chain is MSILARPAAPSPRPNALANWLLLVAVLVFAIVVVGGITRLTESGLSITEWKPVRGIVPPLNQAEWLAEFENYKRIPQYAAFNLHMTLEGFKAIYFWEYMHRLLARGIGAVLAGVMIVAWWKRAIPAGYGWRMIGIFALGGLQGAIGWWMVYSGLSVRTEVSHIRLATHLIAALLIFSALVWTVLDLRRLARDPDARPARPTALAIAAVLILAVQIMLGAFVAGLRAGYAFATWPKMGDEWFPAGGWNVAQGLANLHENPIVVQFVHRWWAWAAAIAALAVARAARKRGAVGPVHAVATLIVVQIALGIATLLTGVDIAVAVAHQAVAVLLLAALLWAGHGLDKPKVS.

8 helical membrane passes run 17–37, 106–126, 132–152, 165–185, 202–222, 260–280, 295–315, and 317–337; these read LANW…VGGI, GIGA…AIPA, MIGI…MVYS, LATH…TVLD, ALAI…AFVA, IVVQ…ALAV, AVAT…LTGV, and IAVA…LLWA. Heme is bound at residue His266. His323 is a heme binding site.

It belongs to the COX15/CtaA family. Type 2 subfamily. Interacts with CtaB. Heme b is required as a cofactor.

The protein resides in the cell membrane. It catalyses the reaction Fe(II)-heme o + 2 A + H2O = Fe(II)-heme a + 2 AH2. It functions in the pathway porphyrin-containing compound metabolism; heme A biosynthesis; heme A from heme O: step 1/1. In terms of biological role, catalyzes the conversion of heme O to heme A by two successive hydroxylations of the methyl group at C8. The first hydroxylation forms heme I, the second hydroxylation results in an unstable dihydroxymethyl group, which spontaneously dehydrates, resulting in the formyl group of heme A. This chain is Heme A synthase, found in Rhizorhabdus wittichii (strain DSM 6014 / CCUG 31198 / JCM 15750 / NBRC 105917 / EY 4224 / RW1) (Sphingomonas wittichii).